The chain runs to 217 residues: 3-demethoxyubiquinol 3-hydroxylase (217 aa).

Residues glutamate 66, glutamate 96, histidine 99, glutamate 148, glutamate 180, and histidine 183 each contribute to the Fe cation site.

The protein belongs to the COQ7 family. The cofactor is Fe cation.

Its subcellular location is the cell membrane. The catalysed reaction is a 5-methoxy-2-methyl-3-(all-trans-polyprenyl)benzene-1,4-diol + AH2 + O2 = a 3-demethylubiquinol + A + H2O. It functions in the pathway cofactor biosynthesis; ubiquinone biosynthesis. Its function is as follows. Catalyzes the hydroxylation of 2-nonaprenyl-3-methyl-6-methoxy-1,4-benzoquinol during ubiquinone biosynthesis. This is 3-demethoxyubiquinol 3-hydroxylase from Xylella fastidiosa (strain Temecula1 / ATCC 700964).